The chain runs to 161 residues: Phosphopantetheine adenylyltransferase (161 aa).

Serine 11 provides a ligand contact to substrate. Residues 11–12 (SF) and histidine 19 each bind ATP. Positions 43, 75, and 89 each coordinate substrate. Residues 90 to 92 (GLR), glutamate 100, and 125 to 131 (YSYLSSS) contribute to the ATP site.

It belongs to the bacterial CoaD family. In terms of assembly, homohexamer. The cofactor is Mg(2+).

The protein localises to the cytoplasm. The catalysed reaction is (R)-4'-phosphopantetheine + ATP + H(+) = 3'-dephospho-CoA + diphosphate. It functions in the pathway cofactor biosynthesis; coenzyme A biosynthesis; CoA from (R)-pantothenate: step 4/5. Reversibly transfers an adenylyl group from ATP to 4'-phosphopantetheine, yielding dephospho-CoA (dPCoA) and pyrophosphate. This is Phosphopantetheine adenylyltransferase from Geobacter sp. (strain M21).